A 94-amino-acid chain; its full sequence is Translation initiation factor 1A 2 (94 aa).

The region spanning 6–80 (GRRNLRMPND…EKANVEWRYS (75 aa)) is the S1-like domain.

The protein belongs to the eIF-1A family.

Functionally, seems to be required for maximal rate of protein biosynthesis. Enhances ribosome dissociation into subunits and stabilizes the binding of the initiator Met-tRNA(I) to 40 S ribosomal subunits. In Halobacterium salinarum (strain ATCC 700922 / JCM 11081 / NRC-1) (Halobacterium halobium), this protein is Translation initiation factor 1A 2 (eIF1A2).